The chain runs to 192 residues: Fe/S biogenesis protein NfuA (192 aa).

C149 and C152 together coordinate [4Fe-4S] cluster.

This sequence belongs to the NfuA family. Homodimer. Requires [4Fe-4S] cluster as cofactor.

Its function is as follows. Involved in iron-sulfur cluster biogenesis. Binds a 4Fe-4S cluster, can transfer this cluster to apoproteins, and thereby intervenes in the maturation of Fe/S proteins. Could also act as a scaffold/chaperone for damaged Fe/S proteins. The polypeptide is Fe/S biogenesis protein NfuA (Idiomarina loihiensis (strain ATCC BAA-735 / DSM 15497 / L2-TR)).